The sequence spans 215 residues: Pyrrolidone-carboxylate peptidase (215 aa).

Catalysis depends on residues Glu-78, Cys-141, and His-165.

The protein belongs to the peptidase C15 family. Homotetramer.

Its subcellular location is the cytoplasm. The catalysed reaction is Release of an N-terminal pyroglutamyl group from a polypeptide, the second amino acid generally not being Pro.. Functionally, removes 5-oxoproline from various penultimate amino acid residues except L-proline. This chain is Pyrrolidone-carboxylate peptidase (pcp), found in Streptococcus pyogenes serotype M1.